The following is a 104-amino-acid chain: Large ribosomal subunit protein uL23 (104 aa).

It belongs to the universal ribosomal protein uL23 family. In terms of assembly, part of the 50S ribosomal subunit. Contacts protein L29, and trigger factor when it is bound to the ribosome.

One of the early assembly proteins it binds 23S rRNA. One of the proteins that surrounds the polypeptide exit tunnel on the outside of the ribosome. Forms the main docking site for trigger factor binding to the ribosome. The chain is Large ribosomal subunit protein uL23 from Leptospira borgpetersenii serovar Hardjo-bovis (strain JB197).